The chain runs to 609 residues: MCGIVGAIAQRDVAEILLEGLRRLEYRGYDSAGLAVVDAEGHMTRLRRLGKVQMLAQAAEEHPLHGGTGIAHTRWATHGEPSEANAHPHVSEHIVVVHNGIIENHEPLREALKARGYTFVSETDTEVIAHLVNWELKQGGTLREAVLRAIPQLRGAYGTVIMDTRHPDTLLAARSGSPLVIGLGMGENFIASDQLALLPVTRRFIFLEEGDIAEITRRSVNIFDNTGAEVKRQDIESNLQYDAGDKGIYRHYMQKEIYEQPNAIKNTLTGRISHGQVDLSELGPNADELLSKVEHIQILACGTSYNSGMVSRYWFESLAGIPCDVEIASEFRYRKSAVRRNSLMITLSQSGETADTLAGLRLSKELGYLGSLAICNVPGSSLVRESDLALMTNAGTEIGVASTKAFTTQLTVLLMLVAKLSRLKGLDASIEHDIVHGLQALPSRIEQMLSQDKRIELLAEDFSDKHHALFLGRGDQYPIALEGALKLKEISYIHAEAYAAGELKHGPLALIDADMPVIVVAPNNELLEKLKSNIEEVRARGGQLYVFADQDAGFVSSDNMHIIEMPHVEEVIAPIFYTVPLQLLAYHVALIKGTDVDQPRNLAKSVTVE.

The active-site Nucleophile; for GATase activity is cysteine 2. The 217-residue stretch at 2–218 (CGIVGAIAQR…EGDIAEITRR (217 aa)) folds into the Glutamine amidotransferase type-2 domain. SIS domains follow at residues 286 to 426 (ADEL…LKGL) and 458 to 599 (LAED…VDQP). Lysine 604 (for Fru-6P isomerization activity) is an active-site residue.

Homodimer.

The protein resides in the cytoplasm. It catalyses the reaction D-fructose 6-phosphate + L-glutamine = D-glucosamine 6-phosphate + L-glutamate. Functionally, catalyzes the first step in hexosamine metabolism, converting fructose-6P into glucosamine-6P using glutamine as a nitrogen source. In Salmonella paratyphi A (strain ATCC 9150 / SARB42), this protein is Glutamine--fructose-6-phosphate aminotransferase [isomerizing].